Here is a 76-residue protein sequence, read N- to C-terminus: U1-cyrtautoxin-As1d (76 aa).

Disulfide bonds link Cys23-Cys37, Cys30-Cys51, Cys36-Cys66, and Cys69-Cys76.

The protein belongs to the neurotoxin 21 family. In terms of tissue distribution, expressed by the venom gland.

The protein resides in the secreted. Its function is as follows. Neurotoxin with probable ion channel impairing activity. In vivo, is both paralytic and lethal, when injected into lepidopteran larvae. The sequence is that of U1-cyrtautoxin-As1d from Apomastus schlingeri (Trap-door spider).